A 408-amino-acid chain; its full sequence is Putative FBD-associated F-box protein At5g50270 (408 aa).

In terms of domain architecture, F-box spans M1–L54. The region spanning P345 to I408 is the FBD domain.

The chain is Putative FBD-associated F-box protein At5g50270 from Arabidopsis thaliana (Mouse-ear cress).